The following is a 572-amino-acid chain: BOS complex subunit ncln (572 aa).

Residues 1–35 form the signal peptide; sequence MFEEAGEVLENMLKVSFPLSLVLFLVLVCPLRAEA. Over 36 to 530 the chain is Extracellular; sequence AHEFSVYRMQ…TMNAYRVKPA (495 aa). Residues asparagine 108, asparagine 234, and asparagine 436 are each glycosylated (N-linked (GlcNAc...) asparagine). Residues 531 to 551 form a helical membrane-spanning segment; that stretch reads IFDLLLAVCIASYLGVLYLAI. The Cytoplasmic segment spans residues 552–572; sequence QNFGLLYGFLRRVTAPRVKQH.

The protein belongs to the nicastrin family. In terms of assembly, component of the multi-pass translocon (MPT) complex.

The protein resides in the endoplasmic reticulum membrane. Its function is as follows. Component of the multi-pass translocon (MPT) complex that mediates insertion of multi-pass membrane proteins into the lipid bilayer of membranes. The MPT complex takes over after the SEC61 complex: following membrane insertion of the first few transmembrane segments of proteins by the SEC61 complex, the MPT complex occludes the lateral gate of the SEC61 complex to promote insertion of subsequent transmembrane regions. Antagonizes Nodal signaling and subsequent organization of axial structures during mesodermal patterning. Ectopic expression results in cyclopia, due to a defect in mesendoderm patterning. The polypeptide is BOS complex subunit ncln (ncln) (Danio rerio (Zebrafish)).